The primary structure comprises 305 residues: Lysosomal thioesterase PPT2 (305 aa).

Residues 1-32 form the signal peptide; the sequence is MLGLPERRLPSAEFLLLLPFLLLLLLLLPAAP. 2 disulfide bridges follow: Cys112-Cys120 and Cys168-Cys179. Ser114 acts as the Nucleophile in catalysis. Residue Asn193 is glycosylated (N-linked (GlcNAc...) asparagine). Catalysis depends on residues Asp231 and His286. A disulfide bridge links Cys279 with Cys299.

Belongs to the palmitoyl-protein thioesterase family.

Its subcellular location is the lysosome. It carries out the reaction hexadecanoyl-CoA + H2O = hexadecanoate + CoA + H(+). The catalysed reaction is S-hexadecanoyl-N-acetylcysteamine + H2O = N-acetylcysteamine + hexadecanoate + H(+). Functionally, catalyzes the cleavage of thioester bonds from S-palmitoyl-CoA or S-palmitoyl-N-acetylcysteamine (unbranched structures) but does not have activity against palmitoylcysteine or palmitoylated proteins, branched structures or bulky head groups. Conversely, hydrolyzes both long and short chain fatty acyl-CoA substrate. The polypeptide is Lysosomal thioesterase PPT2 (PPT2) (Bos taurus (Bovine)).